We begin with the raw amino-acid sequence, 805 residues long: U-box domain-containing protein 70 (805 aa).

7 TPR repeats span residues A15–D48, I49–L82, A90–E127, T129–A153, A154–D187, R189–F221, and L222–N255. The tract at residues A136 to R160 is disordered. A coiled-coil region spans residues R341–K417. The Protein kinase domain occupies F445–I711. ATP is bound by residues I451–V459 and K472. Residue D567 is the Proton acceptor of the active site. The U-box domain occupies S730–S804.

It belongs to the protein kinase superfamily. Ser/Thr protein kinase family. Interacts with MODD.

The enzyme catalyses L-seryl-[protein] + ATP = O-phospho-L-seryl-[protein] + ADP + H(+). The catalysed reaction is L-threonyl-[protein] + ATP = O-phospho-L-threonyl-[protein] + ADP + H(+). It carries out the reaction S-ubiquitinyl-[E2 ubiquitin-conjugating enzyme]-L-cysteine + [acceptor protein]-L-lysine = [E2 ubiquitin-conjugating enzyme]-L-cysteine + N(6)-ubiquitinyl-[acceptor protein]-L-lysine.. It functions in the pathway protein modification; protein ubiquitination. Functions as an E3 ubiquitin ligase. Is recruited by MODD to promote ubiquitination of BZIP46, a positive regulator of abscisic acid (ABA) signaling and drought stress tolerance. This Oryza sativa subsp. japonica (Rice) protein is U-box domain-containing protein 70.